Here is a 293-residue protein sequence, read N- to C-terminus: tRNA-cytidine(32) 2-sulfurtransferase (293 aa).

A PP-loop motif motif is present at residues 62-67 (SGGKDS). Residues Cys137, Cys140, and Cys228 each coordinate [4Fe-4S] cluster.

Belongs to the TtcA family. As to quaternary structure, homodimer. Requires Mg(2+) as cofactor. [4Fe-4S] cluster serves as cofactor.

The protein resides in the cytoplasm. The enzyme catalyses cytidine(32) in tRNA + S-sulfanyl-L-cysteinyl-[cysteine desulfurase] + AH2 + ATP = 2-thiocytidine(32) in tRNA + L-cysteinyl-[cysteine desulfurase] + A + AMP + diphosphate + H(+). It functions in the pathway tRNA modification. Functionally, catalyzes the ATP-dependent 2-thiolation of cytidine in position 32 of tRNA, to form 2-thiocytidine (s(2)C32). The sulfur atoms are provided by the cysteine/cysteine desulfurase (IscS) system. This Brucella suis (strain ATCC 23445 / NCTC 10510) protein is tRNA-cytidine(32) 2-sulfurtransferase.